We begin with the raw amino-acid sequence, 525 residues long: Cytochrome P450 714A2 (525 aa).

Topologically, residues 1-3 (MES) are lumenal. The helical; Signal-anchor for type III membrane protein transmembrane segment at 4 to 24 (LVVHTVNAIWCIVIVGIFSVG) threads the bilayer. At 25–525 (YHVYGRAVVE…PQHGVVIRVV (501 aa)) the chain is on the cytoplasmic side. Cys-475 provides a ligand contact to heme.

The protein belongs to the cytochrome P450 family. Heme serves as cofactor. In terms of tissue distribution, expressed in the shoot apical meristem (SAM) and petioles of young leaves, in the leaf margin and petiole vein of cotyledons, and at low levels in the filaments of developing flowers. Not detected in siliques.

It localises to the endoplasmic reticulum membrane. Involved in the inactivation of early gibberellin (GA) intermediates. This Arabidopsis thaliana (Mouse-ear cress) protein is Cytochrome P450 714A2 (CYP714A2).